The sequence spans 217 residues: MOB kinase activator 3A (217 aa).

4 residues coordinate Zn(2+): Cys-83, Cys-88, His-165, and His-170.

Belongs to the MOB1/phocein family.

Functionally, may regulate the activity of kinases. This is MOB kinase activator 3A (Mob3a) from Mus musculus (Mouse).